Here is an 89-residue protein sequence, read N- to C-terminus: Large ribosomal subunit protein bL27 (89 aa).

The tract at residues 1 to 22 (MAHKKAGGSSRNGRDSAGRRLG) is disordered.

It belongs to the bacterial ribosomal protein bL27 family.

The chain is Large ribosomal subunit protein bL27 from Sphingopyxis alaskensis (strain DSM 13593 / LMG 18877 / RB2256) (Sphingomonas alaskensis).